The chain runs to 341 residues: Ketol-acid reductoisomerase (NADP(+)) (341 aa).

A KARI N-terminal Rossmann domain is found at 2–181 (AKVYYNGDAN…GATRAGVLET (180 aa)). NADP(+) contacts are provided by residues 25 to 28 (YGSQ), R48, S52, and 82 to 85 (DEKQ). H107 is a catalytic residue. Position 133 (G133) interacts with NADP(+). Positions 182–327 (TFKEETETDL…RELRSMMPFV (146 aa)) constitute a KARI C-terminal knotted domain. 4 residues coordinate Mg(2+): D190, E194, E226, and E230. Residue S251 coordinates substrate.

Belongs to the ketol-acid reductoisomerase family. The cofactor is Mg(2+).

The enzyme catalyses (2R)-2,3-dihydroxy-3-methylbutanoate + NADP(+) = (2S)-2-acetolactate + NADPH + H(+). It catalyses the reaction (2R,3R)-2,3-dihydroxy-3-methylpentanoate + NADP(+) = (S)-2-ethyl-2-hydroxy-3-oxobutanoate + NADPH + H(+). It functions in the pathway amino-acid biosynthesis; L-isoleucine biosynthesis; L-isoleucine from 2-oxobutanoate: step 2/4. Its pathway is amino-acid biosynthesis; L-valine biosynthesis; L-valine from pyruvate: step 2/4. In terms of biological role, involved in the biosynthesis of branched-chain amino acids (BCAA). Catalyzes an alkyl-migration followed by a ketol-acid reduction of (S)-2-acetolactate (S2AL) to yield (R)-2,3-dihydroxy-isovalerate. In the isomerase reaction, S2AL is rearranged via a Mg-dependent methyl migration to produce 3-hydroxy-3-methyl-2-ketobutyrate (HMKB). In the reductase reaction, this 2-ketoacid undergoes a metal-dependent reduction by NADPH to yield (R)-2,3-dihydroxy-isovalerate. The chain is Ketol-acid reductoisomerase (NADP(+)) from Geobacillus sp. (strain WCH70).